Here is a 704-residue protein sequence, read N- to C-terminus: Elongation factor G (704 aa).

A tr-type G domain is found at 8–291; it reads DKVRNIGIMA…AVIDYLASPV (284 aa). Residues 17–24, 90–94, and 144–147 each bind GTP; these read AHIDAGKT, DTPGH, and NKMD.

Belongs to the TRAFAC class translation factor GTPase superfamily. Classic translation factor GTPase family. EF-G/EF-2 subfamily.

Its subcellular location is the cytoplasm. Catalyzes the GTP-dependent ribosomal translocation step during translation elongation. During this step, the ribosome changes from the pre-translocational (PRE) to the post-translocational (POST) state as the newly formed A-site-bound peptidyl-tRNA and P-site-bound deacylated tRNA move to the P and E sites, respectively. Catalyzes the coordinated movement of the two tRNA molecules, the mRNA and conformational changes in the ribosome. The sequence is that of Elongation factor G from Chlorobaculum parvum (strain DSM 263 / NCIMB 8327) (Chlorobium vibrioforme subsp. thiosulfatophilum).